The primary structure comprises 290 residues: tRNA (adenine(58)-N(1))-methyltransferase catalytic subunit TRMT61A (290 aa).

S2 bears the N-acetylserine mark. 5 substrate regions span residues 20–22 (LGH), 35–42 (QTQTRHGV), 64–65 (GW), 85–89 (QILYS), and 110–117 (SGTGSGSV). S-adenosyl-L-methionine contacts are provided by residues L87, 114 to 116 (SGS), E135, R140, 163 to 164 (DV), and D181. Substrate regions lie at residues 180–183 (LDIP) and 205–212 (SFSPCIEQ). S264 carries the post-translational modification Phosphoserine. T279 lines the substrate pocket.

The protein belongs to the class I-like SAM-binding methyltransferase superfamily. TRM61 family. In terms of assembly, heterotetramer; composed of two copies of TRMT6 and two copies of TRMT61A.

It localises to the nucleus. The catalysed reaction is adenosine(58) in tRNA + S-adenosyl-L-methionine = N(1)-methyladenosine(58) in tRNA + S-adenosyl-L-homocysteine + H(+). The enzyme catalyses an adenosine in mRNA + S-adenosyl-L-methionine = an N(1)-methyladenosine in mRNA + S-adenosyl-L-homocysteine + H(+). Its function is as follows. Catalytic subunit of tRNA (adenine-N(1)-)-methyltransferase, which catalyzes the formation of N(1)-methyladenine at position 58 (m1A58) in initiator methionyl-tRNA. Catalytic subunit of mRNA N(1)-methyltransferase complex, which mediates methylation of adenosine residues at the N(1) position of a small subset of mRNAs: N(1) methylation takes place in tRNA T-loop-like structures of mRNAs and is only present at low stoichiometries. In Mus musculus (Mouse), this protein is tRNA (adenine(58)-N(1))-methyltransferase catalytic subunit TRMT61A (Trmt61a).